We begin with the raw amino-acid sequence, 357 residues long: 3-isopropylmalate dehydrogenase (357 aa).

Substrate is bound by residues arginine 97, arginine 107, arginine 135, and aspartate 224. 3 residues coordinate Mg(2+): aspartate 224, aspartate 248, and aspartate 252. 282–294 is an NAD(+) binding site; the sequence is GSAPDIAGQDLAN.

The protein belongs to the isocitrate and isopropylmalate dehydrogenases family. LeuB type 1 subfamily. As to quaternary structure, homodimer. The cofactor is Mg(2+). Mn(2+) is required as a cofactor.

It is found in the cytoplasm. The enzyme catalyses (2R,3S)-3-isopropylmalate + NAD(+) = 4-methyl-2-oxopentanoate + CO2 + NADH. Its pathway is amino-acid biosynthesis; L-leucine biosynthesis; L-leucine from 3-methyl-2-oxobutanoate: step 3/4. Functionally, catalyzes the oxidation of 3-carboxy-2-hydroxy-4-methylpentanoate (3-isopropylmalate) to 3-carboxy-4-methyl-2-oxopentanoate. The product decarboxylates to 4-methyl-2 oxopentanoate. In Prochlorococcus marinus (strain MIT 9313), this protein is 3-isopropylmalate dehydrogenase.